Consider the following 710-residue polypeptide: MARITPVSQYRNIGISAHIDAGKTTTTERILFYTGINHKIGEVHDGAATMDWMEQEQERGITITSAATTTFWSGMSKQFLPHRINIIDTPGHVDFTIEVERSMRVLDGAVMIYCAVGGVQPQSETVWRQVNKYNVPRIAFINKMDRMGANFFNVVKQMNERLGIDPVPIQIPINSEENFSGVIDLIRMKAIYWDDLDKGITFKYDNIPSDLTVLSDRWRQKLIESAVENDDFLMDKYLTGKKLSEYEIKNSLRQRVLNNEIVLITCGSAFKNKGVQALLDAIVEYLPSPMDVASYNVKKISQKSNSKKSCSSNMDLSNDQEAFVALAFKIATDPFVGNLTFFRVYSGKVSSGDVIYNSVKKKKERFGRIVQMHANKREEIKEVRAGDIAAAIGLKSVTTGDTLCDPNNVVVLEKMDFPDPVISIAVEPKTKIDQEKMSVALNRLAKEDPSFKVHTDRESNQTIISGMGELHLEIIVDRMRREFGVGANIGQPQVSYRETIQSSVKNVEGKYIKQSGGRGQYGHVVIDLFPLKPLNQSGYIFINDIKGGIIPGEYISAIDKGIQEQLLYGPLAGYSVVDIGVRLHFGSYHDVDSSEIAFKLAASLAFKSAFKKANPVLLEPIMKVEVETPEEYMGDVIGDLNRRRGMIEGMIDLSIGKSIRAQVPLSCMFGYATDVRSQTQGRASYSMEFLKYSEAPVHVASSIIQNRDKN.

Residues 8-290 (SQYRNIGISA…AIVEYLPSPM (283 aa)) form the tr-type G domain. GTP is bound by residues 17–24 (AHIDAGKT), 88–92 (DTPGH), and 142–145 (NKMD).

Belongs to the TRAFAC class translation factor GTPase superfamily. Classic translation factor GTPase family. EF-G/EF-2 subfamily.

The protein resides in the cytoplasm. Its function is as follows. Catalyzes the GTP-dependent ribosomal translocation step during translation elongation. During this step, the ribosome changes from the pre-translocational (PRE) to the post-translocational (POST) state as the newly formed A-site-bound peptidyl-tRNA and P-site-bound deacylated tRNA move to the P and E sites, respectively. Catalyzes the coordinated movement of the two tRNA molecules, the mRNA and conformational changes in the ribosome. The polypeptide is Elongation factor G (Buchnera aphidicola subsp. Baizongia pistaciae (strain Bp)).